Consider the following 497-residue polypeptide: MTHGIGFDRDKYIQLQSEHINERREQIGGKLYLEMGGKLFDDYHASRVLPGFTPDNKIAMLENIKEDVEIVVCLNARDLERGKVRADLSIPYEEDALRLVDVFRDRGFRVNNVVLTQLEDSNHMAVAFAERLERLGLNVARHRVIPGYPTNTELVVSDGGFGLNDYVETSRDLVVVTAPGPGSGKLATCLSQVYHEFRRGVPAGYAKFETFPIWNLPLEHPVNLAYEAATADLDDINVIDPFHLQAYGKQVTSYNRDVEVFPLLKTLLEKLYGHSPYQSPTDMGVNMVGHCISDDELCREAAKQEIVRRYYKALVDERREDTDDTVSSRVAIVMSKVGASTKDRRVVAAANEVEERTGEPGSALELADGTIITGKTSELLGCSAAMLLNALKHLAGLDDDIHLLSPKSIEPIQTLKVDHLGSQNPRLHTDEVLIALSVSAAESEDARAALKQLKNLAGCDVHTTTILGSVDEGIFRNLGVLVTSEPKYWRKALYRKR.

The protein belongs to the UPF0371 family.

This chain is UPF0371 protein cu0538, found in Corynebacterium urealyticum (strain ATCC 43042 / DSM 7109).